Consider the following 101-residue polypeptide: DNA-directed RNA polymerase subunit omega (101 aa).

Residues 1–13 (MSSTPAAASATPS) are compositionally biased toward low complexity. Residues 1–22 (MSSTPAAASATPSHGALPAYDT) are disordered.

The protein belongs to the RNA polymerase subunit omega family. As to quaternary structure, the RNAP catalytic core consists of 2 alpha, 1 beta, 1 beta' and 1 omega subunit. When a sigma factor is associated with the core the holoenzyme is formed, which can initiate transcription.

It catalyses the reaction RNA(n) + a ribonucleoside 5'-triphosphate = RNA(n+1) + diphosphate. Promotes RNA polymerase assembly. Latches the N- and C-terminal regions of the beta' subunit thereby facilitating its interaction with the beta and alpha subunits. The chain is DNA-directed RNA polymerase subunit omega from Rhodococcus jostii (strain RHA1).